The sequence spans 503 residues: Probable cytosol aminopeptidase (503 aa).

Positions 270 and 275 each coordinate Mn(2+). Lysine 282 is a catalytic residue. Residues aspartate 293, aspartate 352, and glutamate 354 each contribute to the Mn(2+) site. The active site involves arginine 356.

Belongs to the peptidase M17 family. Mn(2+) serves as cofactor.

Its subcellular location is the cytoplasm. The enzyme catalyses Release of an N-terminal amino acid, Xaa-|-Yaa-, in which Xaa is preferably Leu, but may be other amino acids including Pro although not Arg or Lys, and Yaa may be Pro. Amino acid amides and methyl esters are also readily hydrolyzed, but rates on arylamides are exceedingly low.. It carries out the reaction Release of an N-terminal amino acid, preferentially leucine, but not glutamic or aspartic acids.. In terms of biological role, presumably involved in the processing and regular turnover of intracellular proteins. Catalyzes the removal of unsubstituted N-terminal amino acids from various peptides. The polypeptide is Probable cytosol aminopeptidase (Salmonella arizonae (strain ATCC BAA-731 / CDC346-86 / RSK2980)).